We begin with the raw amino-acid sequence, 458 residues long: ATP synthase subunit beta (458 aa).

ATP is bound at residue 147–154 (GGAGVGKT).

It belongs to the ATPase alpha/beta chains family. In terms of assembly, F-type ATPases have 2 components, CF(1) - the catalytic core - and CF(0) - the membrane proton channel. CF(1) has five subunits: alpha(3), beta(3), gamma(1), delta(1), epsilon(1). CF(0) has three main subunits: a(1), b(2) and c(9-12). The alpha and beta chains form an alternating ring which encloses part of the gamma chain. CF(1) is attached to CF(0) by a central stalk formed by the gamma and epsilon chains, while a peripheral stalk is formed by the delta and b chains.

Its subcellular location is the cell inner membrane. The enzyme catalyses ATP + H2O + 4 H(+)(in) = ADP + phosphate + 5 H(+)(out). Produces ATP from ADP in the presence of a proton gradient across the membrane. The catalytic sites are hosted primarily by the beta subunits. This is ATP synthase subunit beta from Chromohalobacter salexigens (strain ATCC BAA-138 / DSM 3043 / CIP 106854 / NCIMB 13768 / 1H11).